The sequence spans 363 residues: 3-dehydroquinate synthase (363 aa).

NAD(+) is bound by residues glycine 109–aspartate 113, threonine 133–threonine 134, lysine 146, and lysine 155. Zn(2+) contacts are provided by glutamate 188, histidine 251, and histidine 267.

The protein belongs to the sugar phosphate cyclases superfamily. Dehydroquinate synthase family. It depends on NAD(+) as a cofactor. Co(2+) is required as a cofactor. Zn(2+) serves as cofactor.

The protein resides in the cytoplasm. The enzyme catalyses 7-phospho-2-dehydro-3-deoxy-D-arabino-heptonate = 3-dehydroquinate + phosphate. It participates in metabolic intermediate biosynthesis; chorismate biosynthesis; chorismate from D-erythrose 4-phosphate and phosphoenolpyruvate: step 2/7. Its function is as follows. Catalyzes the conversion of 3-deoxy-D-arabino-heptulosonate 7-phosphate (DAHP) to dehydroquinate (DHQ). This Streptomyces avermitilis (strain ATCC 31267 / DSM 46492 / JCM 5070 / NBRC 14893 / NCIMB 12804 / NRRL 8165 / MA-4680) protein is 3-dehydroquinate synthase.